Consider the following 605-residue polypeptide: Lysophospholipase 1 (605 aa).

A signal peptide spans 1 to 17 (MILHHLLILLIINYCVA). Residues 30-565 (SCPSSQLIRS…ENYCWDGTIY (536 aa)) form the PLA2c domain. N-linked (GlcNAc...) asparagine glycosylation is found at N199, N261, N399, N451, N465, N492, and N573.

Belongs to the lysophospholipase family.

Its subcellular location is the secreted. The catalysed reaction is a 1-acyl-sn-glycero-3-phosphocholine + H2O = sn-glycerol 3-phosphocholine + a fatty acid + H(+). Functionally, catalyzes the release of fatty acids from lysophospholipids. Phospholipase B may well contribute to pathogenicity by abetting the fungus in damaging and traversing host cell membranes, processes which likely increase the rapidity of disseminated infection. This chain is Lysophospholipase 1, found in Candida albicans (strain SC5314 / ATCC MYA-2876) (Yeast).